The following is a 204-amino-acid chain: N-(5'-phosphoribosyl)anthranilate isomerase (204 aa).

This sequence belongs to the TrpF family.

The enzyme catalyses N-(5-phospho-beta-D-ribosyl)anthranilate = 1-(2-carboxyphenylamino)-1-deoxy-D-ribulose 5-phosphate. It participates in amino-acid biosynthesis; L-tryptophan biosynthesis; L-tryptophan from chorismate: step 3/5. In Geobacter sp. (strain M21), this protein is N-(5'-phosphoribosyl)anthranilate isomerase.